The chain runs to 142 residues: Large ribosomal subunit protein uL13 (142 aa).

It belongs to the universal ribosomal protein uL13 family. As to quaternary structure, part of the 50S ribosomal subunit.

In terms of biological role, this protein is one of the early assembly proteins of the 50S ribosomal subunit, although it is not seen to bind rRNA by itself. It is important during the early stages of 50S assembly. The sequence is that of Large ribosomal subunit protein uL13 from Cronobacter sakazakii (strain ATCC BAA-894) (Enterobacter sakazakii).